The chain runs to 367 residues: Glutamate 5-kinase (367 aa).

K10 contributes to the ATP binding site. 3 residues coordinate substrate: S50, D137, and N149. Residues 169 to 170 (TD) and 211 to 217 (TGGMATK) contribute to the ATP site. A PUA domain is found at 275–353 (AGVIIVDNGA…QEISQILGYE (79 aa)).

This sequence belongs to the glutamate 5-kinase family.

Its subcellular location is the cytoplasm. The enzyme catalyses L-glutamate + ATP = L-glutamyl 5-phosphate + ADP. It functions in the pathway amino-acid biosynthesis; L-proline biosynthesis; L-glutamate 5-semialdehyde from L-glutamate: step 1/2. In terms of biological role, catalyzes the transfer of a phosphate group to glutamate to form L-glutamate 5-phosphate. In Proteus mirabilis (strain HI4320), this protein is Glutamate 5-kinase.